A 557-amino-acid chain; its full sequence is Leucine-rich glioma-inactivated protein 1 (557 aa).

Residues 1–34 form the signal peptide; the sequence is MESESSRRMGNACIPLKRIAYFLCLFSVVLLTEG. Residues 35–72 form the LRRNT domain; the sequence is KKPAKPKCPAVCTCSKDNALCENARSIPRTVPPDVISL. 3 LRR repeats span residues 92–113, 116–137, and 140–161; these read SLQL…AFIG, HLEY…TFRG, and SLIH…IFKG. Residues 173–223 form the LRRCT domain; it reads NAFNCDCKLKWLVEWLGHTNATVEDIYCEGPPEYKKRKINSLSPKDFDCII. N192 carries an N-linked (GlcNAc...) asparagine glycan. EAR repeat units follow at residues 225-267, 271-313, 317-364, 366-415, 419-462, 464-506, and 510-552; these read EFAK…EWDH, TFRN…KRDG, KFIK…KWNG, GFYS…QWSK, LFTN…KWGG, SFQD…NWDA, and KFVK…KHVI. N-linked (GlcNAc...) asparagine glycosylation is present at N277. N422 carries N-linked (GlcNAc...) asparagine glycosylation.

In terms of assembly, oligomer. Interacts with KCNA1 within a complex containing KCNA1, KCNA4 and KCNAB1. Part of a complex containing ADAM22, DLG4/PSD95 and CACNG2 (stargazin). Can bind to ADAM11 and ADAM23. Glycosylated. As to expression, expressed in the brain (at protein level). Expressed in cerebellar cortex basket cell terminals (at protein level). Highly expressed in the dentate gyrus and CA3 field of the hippocampus.

The protein localises to the secreted. It is found in the synapse. The protein resides in the cytoplasm. Its subcellular location is the golgi apparatus. It localises to the endoplasmic reticulum. In terms of biological role, regulates voltage-gated potassium channels assembled from KCNA1, KCNA4 and KCNAB1. It slows down channel inactivation by precluding channel closure mediated by the KCNAB1 subunit. Ligand for ADAM22 that positively regulates synaptic transmission mediated by AMPA-type glutamate receptors. Plays a role in suppressing the production of MMP1/3 through the phosphatidylinositol 3-kinase/ERK pathway. The sequence is that of Leucine-rich glioma-inactivated protein 1 from Mus musculus (Mouse).